A 364-amino-acid polypeptide reads, in one-letter code: Trans-enoyl reductase traG (364 aa).

51-54 (VDAK) serves as a coordination point for NADP(+). 136 to 143 (LGLFTAGL) contributes to the substrate binding site. NADP(+)-binding positions include 176–179 (STAT), 199–202 (SKAN), Tyr217, and 264–265 (LE). Position 286 to 290 (286 to 290 (ALTVF)) interacts with substrate. NADP(+) is bound at residue 355-356 (MS).

This sequence belongs to the zinc-containing alcohol dehydrogenase family. As to quaternary structure, monomer.

It functions in the pathway secondary metabolite biosynthesis. In terms of biological role, trans-enoyl reductase; part of the tra gene cluster that produces terrestric acid. The clavatol biosynthesis cluster cla and the terrestric acid cluster tra are both involved in the production of peniphenones and penilactones. The non-reducing PKS claF is responsible for the formation of clavatol from successive condensations of 3 malonyl-CoA units, presumably with a simple acetyl-CoA starter unit, and 2 methylation steps. The esterase claE probably collaborates with claF by catalyzing the hydrolysis of ACP-bound acyl intermediates to free the ACP from stalled intermediates. The clavatol oxidase claD then converts clavatol to hydroxyclavatol. Spontaneous dehydration of hydroxyclavatol leads to the accumulation of the highly active ortho-quinone methide. On the other hand, the PKS-NRPS hybrid traA is involved in the formation of crustosic acid, with the help of traB and traD. The polyketide synthase module (PKS) of traA is responsible for the synthesis of the polyketide backbone via the condensation of an acetyl-CoA starter unit with 3 malonyl-CoA units. The downstream nonribosomal peptide synthetase (NRPS) module then amidates the carboxyl end of the polyketide with L-malic acid. Because traA lacks a designated enoylreductase (ER) domain, the required activity is provided the enoyl reductase traG. Crustosic acid undergoes decarboxylation and isomerization to the terrestric acid, catalyzed by the 2-oxoglutarate-dependent dioxygenase traH. Both acids are further converted to the 2 gamma-butyrolactones (R)-5-methyltetronic acid and (S)-5-carboxylmethyltetronic acid, with involvement of the cytochrome P450 monooxygenase claJ. Spontaneous addition of the methide to these gamma-butyrolactones leads to peniphenone D and penilactone D, which undergo again stereospecific attacking by methide to give penilactones A and B. This Penicillium crustosum (Blue mold fungus) protein is Trans-enoyl reductase traG.